Reading from the N-terminus, the 855-residue chain is Endochitinase 2 (855 aa).

The first 22 residues, methionine 1–alanine 22, serve as a signal peptide directing secretion. The GH18 domain occupies serine 29–cysteine 340. Asparagine 90 carries an N-linked (GlcNAc...) asparagine glycan. Glutamate 175 serves as the catalytic Proton donor. The interval aspartate 341 to arginine 672 is disordered. Residues threonine 346–serine 400 show a composition bias toward low complexity. Polar residues predominate over residues isoleucine 401–proline 456. The span at serine 457–threonine 483 shows a compositional bias: low complexity. Over residues lysine 484–glycine 521 the composition is skewed to polar residues. Positions serine 522 to serine 533 are enriched in low complexity. Polar residues predominate over residues alanine 534–proline 555. A compositionally biased stretch (low complexity) spans threonine 556 to serine 567. Polar residues predominate over residues methionine 568 to glycine 641. Composition is skewed to low complexity over residues threonine 642–threonine 652 and threonine 659–arginine 672. Glycine 826 is lipidated: GPI-anchor amidated glycine. A propeptide spans serine 827–leucine 855 (removed in mature form).

The protein belongs to the glycosyl hydrolase 18 family. Chitinase class III subfamily.

It localises to the cell membrane. It carries out the reaction Random endo-hydrolysis of N-acetyl-beta-D-glucosaminide (1-&gt;4)-beta-linkages in chitin and chitodextrins.. May be associated with endosporulation. This Coccidioides posadasii (strain C735) (Valley fever fungus) protein is Endochitinase 2 (CTS2).